A 364-amino-acid chain; its full sequence is Sulfate/thiosulfate import ATP-binding protein CysA (364 aa).

The 235-residue stretch at 3–237 (IEIARIKKSF…PATRFVLEFM (235 aa)) folds into the ABC transporter domain. Position 35–42 (35–42 (GPSGSGKT)) interacts with ATP.

The protein belongs to the ABC transporter superfamily. Sulfate/tungstate importer (TC 3.A.1.6) family. The complex is composed of two ATP-binding proteins (CysA), two transmembrane proteins (CysT and CysW) and a solute-binding protein (CysP).

The protein localises to the cell inner membrane. It catalyses the reaction sulfate(out) + ATP + H2O = sulfate(in) + ADP + phosphate + H(+). It carries out the reaction thiosulfate(out) + ATP + H2O = thiosulfate(in) + ADP + phosphate + H(+). Part of the ABC transporter complex CysAWTP involved in sulfate/thiosulfate import. Responsible for energy coupling to the transport system. The chain is Sulfate/thiosulfate import ATP-binding protein CysA from Salmonella typhi.